Consider the following 569-residue polypeptide: Tetratricopeptide repeat protein 22 (569 aa).

TPR repeat units lie at residues 66-99 (PAVR…HPGN), 101-133 (NAWA…MGLA), 203-237 (ATLY…LRQV), 260-294 (KDTF…AKNQ), 295-328 (PPIL…LRDP), 383-418 (FKAY…ALVF), and 432-465 (PELQ…DDAG).

This chain is Tetratricopeptide repeat protein 22 (TTC22), found in Homo sapiens (Human).